Reading from the N-terminus, the 235-residue chain is Sugar fermentation stimulation protein homolog (235 aa).

It belongs to the SfsA family.

The polypeptide is Sugar fermentation stimulation protein homolog (Nitrosococcus oceani (strain ATCC 19707 / BCRC 17464 / JCM 30415 / NCIMB 11848 / C-107)).